The chain runs to 368 residues: MRAEIENYVKKIEQSLELLRRSLDVETSAARLAELEELAASPDLWNDQANAQKLLREKSNLEEQLGAYNKIRSNLKDALELEEMAEAENDLEIMQQVEKDLQSLSTIAAKFETECLFSGEADSNNCFLEINAGAGGTESHDWASIMMRMYLRFAERLGFKTEIINMINGEEAGIKSCTIRIIGRRAYGWLKTEAGVHRLVRISPFNAAGKRMTSFASSWVYPEIDDNIAITIEDKDLRIDTFRASGAGGQHVNTTDSAVRITHIPTGTVTQCQSDRSQHKNKAQAMKMLQAKLYELEMQKRTDSVNEQNAAKTDNSWGHQIRSYVLQPYQMVKDLRTDYETSDTKGVLDGDLEEFVSASLAMNAGSKK.

Glutamine 250 carries the post-translational modification N5-methylglutamine.

Belongs to the prokaryotic/mitochondrial release factor family. In terms of processing, methylated by PrmC. Methylation increases the termination efficiency of RF2.

The protein localises to the cytoplasm. In terms of biological role, peptide chain release factor 2 directs the termination of translation in response to the peptide chain termination codons UGA and UAA. In Rickettsia bellii (strain RML369-C), this protein is Peptide chain release factor 2.